A 263-amino-acid polypeptide reads, in one-letter code: Acyl-[acyl-carrier-protein]--UDP-N-acetylglucosamine O-acyltransferase (263 aa).

Belongs to the transferase hexapeptide repeat family. LpxA subfamily. Homotrimer.

The protein localises to the cytoplasm. It catalyses the reaction a (3R)-hydroxyacyl-[ACP] + UDP-N-acetyl-alpha-D-glucosamine = a UDP-3-O-[(3R)-3-hydroxyacyl]-N-acetyl-alpha-D-glucosamine + holo-[ACP]. It participates in glycolipid biosynthesis; lipid IV(A) biosynthesis; lipid IV(A) from (3R)-3-hydroxytetradecanoyl-[acyl-carrier-protein] and UDP-N-acetyl-alpha-D-glucosamine: step 1/6. Its function is as follows. Involved in the biosynthesis of lipid A, a phosphorylated glycolipid that anchors the lipopolysaccharide to the outer membrane of the cell. The sequence is that of Acyl-[acyl-carrier-protein]--UDP-N-acetylglucosamine O-acyltransferase from Tolumonas auensis (strain DSM 9187 / NBRC 110442 / TA 4).